We begin with the raw amino-acid sequence, 321 residues long: Porphobilinogen deaminase (321 aa).

C243 carries the post-translational modification S-(dipyrrolylmethanemethyl)cysteine.

The protein belongs to the HMBS family. Monomer. Requires dipyrromethane as cofactor.

It carries out the reaction 4 porphobilinogen + H2O = hydroxymethylbilane + 4 NH4(+). It functions in the pathway porphyrin-containing compound metabolism; protoporphyrin-IX biosynthesis; coproporphyrinogen-III from 5-aminolevulinate: step 2/4. Functionally, tetrapolymerization of the monopyrrole PBG into the hydroxymethylbilane pre-uroporphyrinogen in several discrete steps. The sequence is that of Porphobilinogen deaminase from Histophilus somni (strain 129Pt) (Haemophilus somnus).